The chain runs to 360 residues: Ribosomal RNA large subunit methyltransferase M (360 aa).

Residues Ser187, 220-223, Asp239, Asp259, and Asp276 contribute to the S-adenosyl-L-methionine site; that span reads CPGG. The Proton acceptor role is filled by Lys305.

It belongs to the class I-like SAM-binding methyltransferase superfamily. RNA methyltransferase RlmE family. RlmM subfamily. Monomer.

The protein resides in the cytoplasm. The catalysed reaction is cytidine(2498) in 23S rRNA + S-adenosyl-L-methionine = 2'-O-methylcytidine(2498) in 23S rRNA + S-adenosyl-L-homocysteine + H(+). Its function is as follows. Catalyzes the 2'-O-methylation at nucleotide C2498 in 23S rRNA. The sequence is that of Ribosomal RNA large subunit methyltransferase M from Photobacterium profundum (strain SS9).